A 245-amino-acid polypeptide reads, in one-letter code: DNA repair protein RecO (245 aa).

It belongs to the RecO family.

Involved in DNA repair and RecF pathway recombination. The chain is DNA repair protein RecO from Porphyromonas gingivalis (strain ATCC BAA-308 / W83).